The primary structure comprises 620 residues: Mitochondrial Rho GTPase 2 (620 aa).

Residues 1–594 lie on the Cytoplasmic side of the membrane; that stretch reads MKRDVRILLL…ELHTTSFWLR (594 aa). One can recognise a Miro 1 domain in the interval 2-168; the sequence is KRDVRILLLG…FYYAQKAVLH (167 aa). GTP is bound by residues Gly-16, Lys-17, Thr-18, and Ser-19. Thr-18 is a Mg(2+) binding site. Mg(2+)-binding residues include Pro-35 and Asp-57. Ser-59 lines the GTP pocket. Lys-96 participates in a covalent cross-link: Glycyl lysine isopeptide (Lys-Gly) (interchain with G-Cter in ubiquitin). The GTP site is built by Asn-118, Lys-119, Asp-121, Ala-149, and Lys-150. Lys-119 is covalently cross-linked (Glycyl lysine isopeptide (Lys-Gly) (interchain with G-Cter in ubiquitin)). Lys-164 participates in a covalent cross-link: Glycyl lysine isopeptide (Lys-Gly) (interchain with G-Cter in ubiquitin). EF-hand domains are found at residues 184-219 and 304-339; these read ACAQALTRIFRLSDQDMDQALSDQELNAFQTCCFGH and HGYQFAQRMLEKHDQDRDGALSPAELESLFSVFPGP. Residues Asp-197, Asp-199, Asp-201, Glu-208, Asp-317, Asp-319, Asp-321, and Glu-328 each coordinate Ca(2+). Residues 340 to 364 form a disordered region; it reads PWGPQLPRHRPHRGRSAAPARVPLP. Positions 415–578 constitute a Miro 2 domain; the sequence is RNVLLCKVLG…FARLATMATF (164 aa). Gly-427, Gly-429, Lys-430, and Ser-431 together coordinate GTP. Mg(2+) is bound by residues Ser-431 and Glu-473. GTP is bound by residues Lys-527, Asp-529, and Cys-558. A helical; Anchor for type IV membrane protein membrane pass occupies residues 595-617; it reads VALGAVGAAVAAILSFSLYRVLV. Residues 618–620 are Mitochondrial intermembrane-facing; it reads KSR.

It belongs to the mitochondrial Rho GTPase family. As to quaternary structure, homodimer. Interacts with the kinesin-binding proteins TRAK1/OIP106 and TRAK2/GRIF1, forming a link between mitochondria and the trafficking apparatus of the microtubules. Interacts with ARMCX3. Found in a complex with KIF5B, OGT, RHOT1 and TRAK1. Ubiquitinated by PRKN in a PINK1-dependent manner, leading to its degradation.

Its subcellular location is the mitochondrion outer membrane. It carries out the reaction GTP + H2O = GDP + phosphate + H(+). The enzyme catalyses ATP + H2O = ADP + phosphate + H(+). The catalysed reaction is UTP + H2O = UDP + phosphate + H(+). Its function is as follows. Atypical mitochondrial nucleoside-triphosphatase (NTPase) involved in mitochondrial trafficking. Probably involved in control of anterograde transport of mitochondria and their subcellular distribution. Can hydrolyze GTP, ATP and UTP. This is Mitochondrial Rho GTPase 2 (RHOT2) from Sus scrofa (Pig).